Consider the following 57-residue polypeptide: Aspartyl-phosphate phosphatase YnzD (57 aa).

This sequence belongs to the spo0E family.

Its function is as follows. Aspartyl-phosphate phosphatase which specifically dephosphorylates the sporulation transcription factor Spo0A-P and negatively regulates the sporulation initiation pathway in order to control the proper timing of sporulation. The sequence is that of Aspartyl-phosphate phosphatase YnzD (ynzD) from Bacillus subtilis (strain 168).